Consider the following 607-residue polypeptide: Developmental gene 1062 protein (607 aa).

Disordered stretches follow at residues 62 to 84, 334 to 451, and 568 to 602; these read LQGQ…HNNQ, ICDD…SNFQ, and DNNT…NDLL. The segment covering 334-363 has biased composition (low complexity); that stretch reads ICDDSSNSSTPSLSSYSNGNNKYNNNNNDS. The span at 364–382 shows a compositional bias: acidic residues; that stretch reads SESDESDDDDNNDDDDNDS. 2 stretches are compositionally biased toward low complexity: residues 383–451 and 568–582; these read IDFN…SNFQ and DNNT…ISVN.

The chain is Developmental gene 1062 protein (DG1062) from Dictyostelium discoideum (Social amoeba).